A 419-amino-acid polypeptide reads, in one-letter code: Serine hydroxymethyltransferase (419 aa).

Residues Leu119 and 123-125 (GHL) each bind (6S)-5,6,7,8-tetrahydrofolate. Lys228 bears the N6-(pyridoxal phosphate)lysine mark.

It belongs to the SHMT family. As to quaternary structure, homodimer. It depends on pyridoxal 5'-phosphate as a cofactor.

The protein resides in the cytoplasm. The catalysed reaction is (6R)-5,10-methylene-5,6,7,8-tetrahydrofolate + glycine + H2O = (6S)-5,6,7,8-tetrahydrofolate + L-serine. It functions in the pathway one-carbon metabolism; tetrahydrofolate interconversion. Its pathway is amino-acid biosynthesis; glycine biosynthesis; glycine from L-serine: step 1/1. Functionally, catalyzes the reversible interconversion of serine and glycine with tetrahydrofolate (THF) serving as the one-carbon carrier. This reaction serves as the major source of one-carbon groups required for the biosynthesis of purines, thymidylate, methionine, and other important biomolecules. Also exhibits THF-independent aldolase activity toward beta-hydroxyamino acids, producing glycine and aldehydes, via a retro-aldol mechanism. This Desulfosudis oleivorans (strain DSM 6200 / JCM 39069 / Hxd3) (Desulfococcus oleovorans) protein is Serine hydroxymethyltransferase.